Here is a 352-residue protein sequence, read N- to C-terminus: Molybdenum import ATP-binding protein ModC (352 aa).

Residues Met1–Glu229 enclose the ABC transporter domain. Gly31–Thr38 contacts ATP. The region spanning Gln289–Ala352 is the Mop domain.

This sequence belongs to the ABC transporter superfamily. Molybdate importer (TC 3.A.1.8) family. In terms of assembly, the complex is composed of two ATP-binding proteins (ModC), two transmembrane proteins (ModB) and a solute-binding protein (ModA).

It localises to the cell inner membrane. The catalysed reaction is molybdate(out) + ATP + H2O = molybdate(in) + ADP + phosphate + H(+). Its function is as follows. Part of the ABC transporter complex ModABC involved in molybdenum import. Responsible for energy coupling to the transport system. The chain is Molybdenum import ATP-binding protein ModC from Escherichia coli O6:H1 (strain CFT073 / ATCC 700928 / UPEC).